The chain runs to 404 residues: Cysteine desulfurase IscS (404 aa).

Pyridoxal 5'-phosphate is bound by residues 75–76 (AT), Asn155, Gln183, and 203–205 (SAH). Lys206 is modified (N6-(pyridoxal phosphate)lysine). Thr243 contributes to the pyridoxal 5'-phosphate binding site. Cys328 functions as the Cysteine persulfide intermediate in the catalytic mechanism. Cys328 serves as a coordination point for [2Fe-2S] cluster.

It belongs to the class-V pyridoxal-phosphate-dependent aminotransferase family. NifS/IscS subfamily. As to quaternary structure, homodimer. Forms a heterotetramer with IscU, interacts with other sulfur acceptors. The cofactor is pyridoxal 5'-phosphate.

It is found in the cytoplasm. The catalysed reaction is (sulfur carrier)-H + L-cysteine = (sulfur carrier)-SH + L-alanine. The protein operates within cofactor biosynthesis; iron-sulfur cluster biosynthesis. Functionally, master enzyme that delivers sulfur to a number of partners involved in Fe-S cluster assembly, tRNA modification or cofactor biosynthesis. Catalyzes the removal of elemental sulfur atoms from cysteine to produce alanine. Functions as a sulfur delivery protein for Fe-S cluster synthesis onto IscU, an Fe-S scaffold assembly protein, as well as other S acceptor proteins. The polypeptide is Cysteine desulfurase IscS (Pseudomonas putida (strain GB-1)).